We begin with the raw amino-acid sequence, 1187 residues long: DENN domain and WD repeat-containing protein SCD1 (1187 aa).

One can recognise a uDENN domain in the interval 19-179 (TVDGDLGFHG…NVPLPTPGKD (161 aa)). In terms of domain architecture, cDENN spans 199–330 (SLPQADISLQ…EFSTLRNDIL (132 aa)). The dDENN domain occupies 332 to 437 (LLHPNVVAID…ERRLSSDEKS (106 aa)). Disordered regions lie at residues 508-536 (SGAL…SSME) and 765-793 (SAGL…GRSW). The segment covering 526 to 536 (NTKEDNFSSME) has biased composition (basic and acidic residues). Positions 779-793 (SDETQQPSEASGRSW) are enriched in polar residues. 8 WD repeats span residues 841-892 (GHGG…SELR), 897-934 (GHTG…LLEE), 937-975 (GHDS…CVAT), 978-1017 (RCSS…QMHK), 1020-1057 (GHTK…CDAV), 1060-1099 (CHAG…IKCV), 1104-1141 (LHSS…GTKV), and 1152-1187 (RTAA…TINI).

In terms of assembly, interacts with FLS2. Expressed in roots, rosette and cauline leaves, buds and flowers.

The protein resides in the cell membrane. It localises to the cytoplasmic vesicle. The protein localises to the clathrin-coated vesicle. Involved in growth and development through its role in cytokinesis and polarized cell expansion. Required for plasma membrane internalization. May function in clathrin-mediated membrane trafficking, including plasma membrane endocytosis, essential to both cytokinesis and cell expansion. Acts as a negative regulator of basal resistance against bacteria. This is DENN domain and WD repeat-containing protein SCD1 from Arabidopsis thaliana (Mouse-ear cress).